Reading from the N-terminus, the 149-residue chain is UPF0260 protein PSPTO_3918 (149 aa).

Belongs to the UPF0260 family.

The protein is UPF0260 protein PSPTO_3918 of Pseudomonas syringae pv. tomato (strain ATCC BAA-871 / DC3000).